Consider the following 374-residue polypeptide: MKKISKAGLGLALVCALATIGGNAARRATAQRRGSGVFYDEMFDFDIDAHLAKHAPHLHKHSEEISHWAGYSGISRSVDRADGAAERAVTPSARRIVRSASWRAPTASARRPARSRWRCASRCTSAIPTRQGAGDAGPRQSAAGAVRAFRRQRAGGRAARRRRVPAGLRPPVQRTAPGQGGFGPLRQGRPGRAAVSPNGLLQFPFPRGASWHVGGAHTNTGSGNYPMSSLDMSRGGGWGSNQNGNWVSASAAGSFKRHSSCFAEIVHTGGWSTTYYHLMNIQYNTGANVSMNTAIANPANTQAQALCNGGQSTGPHEHWSLKQNGSFYHLNGTYLSGYRITATGSSYDTNCSRFYLTKNGQNYCYGYYVNPGPN.

An N-terminal signal peptide occupies residues methionine 1–alanine 24. Residues alanine 25–valine 195 constitute a propeptide that is removed on maturation. The disordered stretch occupies residues proline 128–glutamine 187. The segment covering alanine 148–valine 164 has biased composition (basic residues). An intrachain disulfide couples cysteine 261 to cysteine 307. The Zn(2+) site is built by histidine 316 and histidine 318. Residues cysteine 351 and cysteine 364 are joined by a disulfide bond.

It belongs to the peptidase M23A family. The cofactor is Zn(2+).

Its subcellular location is the secreted. It catalyses the reaction Cleavage of N-acetylmuramoyl-|-Ala, and of the insulin B chain at 23-Gly-|-Phe-24 &gt; 18-Val-|-Cys(SO3H).. In Achromobacter lyticus, this protein is Beta-lytic metalloendopeptidase.